Here is a 291-residue protein sequence, read N- to C-terminus: Nucleotide-binding protein MSMEG_3079/MSMEI_3001 (291 aa).

Residue 14–21 (GLSGAGRG) participates in ATP binding. Residue 65-68 (DVRS) participates in GTP binding.

The protein belongs to the RapZ-like family.

Functionally, displays ATPase and GTPase activities. In Mycolicibacterium smegmatis (strain ATCC 700084 / mc(2)155) (Mycobacterium smegmatis), this protein is Nucleotide-binding protein MSMEG_3079/MSMEI_3001.